Reading from the N-terminus, the 444-residue chain is Signal recognition particle 54 kDa protein (444 aa).

Residues 104 to 111 (GLQGSGKT), 184 to 188 (DTAGR), and 242 to 245 (TKLD) each bind GTP.

This sequence belongs to the GTP-binding SRP family. SRP54 subfamily. In terms of assembly, part of the signal recognition particle protein translocation system, which is composed of SRP and FtsY. Archaeal SRP consists of a 7S RNA molecule of 300 nucleotides and two protein subunits: SRP54 and SRP19.

It localises to the cytoplasm. The catalysed reaction is GTP + H2O = GDP + phosphate + H(+). In terms of biological role, involved in targeting and insertion of nascent membrane proteins into the cytoplasmic membrane. Binds to the hydrophobic signal sequence of the ribosome-nascent chain (RNC) as it emerges from the ribosomes. The SRP-RNC complex is then targeted to the cytoplasmic membrane where it interacts with the SRP receptor FtsY. The protein is Signal recognition particle 54 kDa protein of Methanothrix thermoacetophila (strain DSM 6194 / JCM 14653 / NBRC 101360 / PT) (Methanosaeta thermophila).